A 427-amino-acid chain; its full sequence is Methylenetetrahydrofolate--tRNA-(uracil-5-)-methyltransferase TrmFO (427 aa).

Residue Gly8–Gly13 participates in FAD binding.

It belongs to the MnmG family. TrmFO subfamily. FAD is required as a cofactor.

The protein localises to the cytoplasm. The catalysed reaction is uridine(54) in tRNA + (6R)-5,10-methylene-5,6,7,8-tetrahydrofolate + NADH + H(+) = 5-methyluridine(54) in tRNA + (6S)-5,6,7,8-tetrahydrofolate + NAD(+). It catalyses the reaction uridine(54) in tRNA + (6R)-5,10-methylene-5,6,7,8-tetrahydrofolate + NADPH + H(+) = 5-methyluridine(54) in tRNA + (6S)-5,6,7,8-tetrahydrofolate + NADP(+). Functionally, catalyzes the folate-dependent formation of 5-methyl-uridine at position 54 (M-5-U54) in all tRNAs. The sequence is that of Methylenetetrahydrofolate--tRNA-(uracil-5-)-methyltransferase TrmFO from Mycoplasmopsis agalactiae (strain NCTC 10123 / CIP 59.7 / PG2) (Mycoplasma agalactiae).